The sequence spans 203 residues: Outer-membrane lipoprotein LolB (203 aa).

The first 21 residues, 1–21 (MRLSASLFHIALVTVLLVLAG), serve as a signal peptide directing secretion. The N-palmitoyl cysteine moiety is linked to residue Cys22. A lipid anchor (S-diacylglycerol cysteine) is attached at Cys22.

The protein belongs to the LolB family. In terms of assembly, monomer.

It localises to the cell outer membrane. Plays a critical role in the incorporation of lipoproteins in the outer membrane after they are released by the LolA protein. The sequence is that of Outer-membrane lipoprotein LolB from Shewanella frigidimarina (strain NCIMB 400).